A 401-amino-acid chain; its full sequence is 8-amino-7-oxononanoate synthase (401 aa).

Arg19 contacts substrate. Position 106 to 107 (106 to 107 (GY)) interacts with pyridoxal 5'-phosphate. Residue His131 participates in substrate binding. The pyridoxal 5'-phosphate site is built by Ser176, His204, and Thr233. Lys236 bears the N6-(pyridoxal phosphate)lysine mark. Position 350 (Thr350) interacts with substrate.

It belongs to the class-II pyridoxal-phosphate-dependent aminotransferase family. BioF subfamily. In terms of assembly, homodimer. It depends on pyridoxal 5'-phosphate as a cofactor.

The enzyme catalyses 6-carboxyhexanoyl-[ACP] + L-alanine + H(+) = (8S)-8-amino-7-oxononanoate + holo-[ACP] + CO2. It participates in cofactor biosynthesis; biotin biosynthesis. Its function is as follows. Catalyzes the decarboxylative condensation of pimeloyl-[acyl-carrier protein] and L-alanine to produce 8-amino-7-oxononanoate (AON), [acyl-carrier protein], and carbon dioxide. The protein is 8-amino-7-oxononanoate synthase of Pseudomonas paraeruginosa (strain DSM 24068 / PA7) (Pseudomonas aeruginosa (strain PA7)).